Reading from the N-terminus, the 357-residue chain is Cobalt-precorrin-5B C(1)-methyltransferase (357 aa).

This sequence belongs to the CbiD family.

The catalysed reaction is Co-precorrin-5B + S-adenosyl-L-methionine = Co-precorrin-6A + S-adenosyl-L-homocysteine. Its pathway is cofactor biosynthesis; adenosylcobalamin biosynthesis; cob(II)yrinate a,c-diamide from sirohydrochlorin (anaerobic route): step 6/10. Functionally, catalyzes the methylation of C-1 in cobalt-precorrin-5B to form cobalt-precorrin-6A. The polypeptide is Cobalt-precorrin-5B C(1)-methyltransferase (Paramagnetospirillum magneticum (strain ATCC 700264 / AMB-1) (Magnetospirillum magneticum)).